Here is a 515-residue protein sequence, read N- to C-terminus: ADP,ATP carrier protein 1 (515 aa).

Transmembrane regions (helical) follow at residues 24–44 (LKKVLPMFLMFFCITFNYTVL), 62–82 (AIPFIKFWLVVPCAIIFMLIY), 93–113 (ALFYAVGTPFLIFFALFPTVI), 124–144 (EFADRLQAILPPGLLGLVAIL), 149–169 (FAAFYVLAELWGSVMLSLMFW), 184–204 (FYALFGIGANISLLASGRAIV), 226–246 (LLMAMTIVSGLVLMASYWWIN), 286–306 (YILLLALLVIAYGICINLIEV), 329–349 (FSFWTGVVSVLIMLFVGGNVI), 358–378 (ALVTPVMVLLTGIVFFALVIF), 383–403 (SGLVAMFGTTPLMLAVVVGAI), and 465–485 (IGAMTPYLAVILLFIIAIWLV).

Belongs to the ADP/ATP translocase tlc family.

It localises to the cell membrane. The chain is ADP,ATP carrier protein 1 (tlcA) from Chlamydia pneumoniae (Chlamydophila pneumoniae).